We begin with the raw amino-acid sequence, 92 residues long: Isoleucine--tRNA ligase (92 aa).

Zn(2+) is bound by residues Cys-55, Cys-58, Cys-75, and Cys-78.

It belongs to the class-I aminoacyl-tRNA synthetase family. IleS type 1 subfamily. As to quaternary structure, monomer. Zn(2+) is required as a cofactor.

The protein localises to the cytoplasm. It catalyses the reaction tRNA(Ile) + L-isoleucine + ATP = L-isoleucyl-tRNA(Ile) + AMP + diphosphate. Catalyzes the attachment of isoleucine to tRNA(Ile). As IleRS can inadvertently accommodate and process structurally similar amino acids such as valine, to avoid such errors it has two additional distinct tRNA(Ile)-dependent editing activities. One activity is designated as 'pretransfer' editing and involves the hydrolysis of activated Val-AMP. The other activity is designated 'posttransfer' editing and involves deacylation of mischarged Val-tRNA(Ile). In Klebsiella aerogenes (Enterobacter aerogenes), this protein is Isoleucine--tRNA ligase (ileS).